We begin with the raw amino-acid sequence, 415 residues long: Methylmalonic aciduria type A homolog, mitochondrial (415 aa).

Residues 1–62 (MTISTLLLSP…LLSDGFRRTL (62 aa)) constitute a mitochondrion transit peptide. GTP-binding positions include 147–155 (GPPGAGKST), D289, and 325–327 (SAR).

The protein belongs to the SIMIBI class G3E GTPase family. ArgK/MeaB subfamily. As to quaternary structure, homodimer. Interacts with MMUT (the apoenzyme form); the interaction is GTP dependent.

The protein resides in the mitochondrion. Its subcellular location is the cytoplasm. It catalyses the reaction GTP + H2O = GDP + phosphate + H(+). GTPase activity is stimulated by MMUT. GTPase, binds and hydrolyzes GTP. Involved in intracellular vitamin B12 metabolism, mediates the transport of cobalamin (Cbl) into mitochondria for the final steps of adenosylcobalamin (AdoCbl) synthesis. Functions as a G-protein chaperone that assists AdoCbl cofactor delivery from MMAB to the methylmalonyl-CoA mutase (MMUT). Plays a dual role as both a protectase and a reactivase for MMUT. Protects MMUT from progressive inactivation by oxidation by decreasing the rate of the formation of the oxidized inactive cofactor hydroxocobalamin (OH2Cbl). Additionally acts a reactivase by promoting the replacement of OH2Cbl by the active cofactor AdoCbl, restoring the activity of MMUT in the presence and hydrolysis of GTP. The sequence is that of Methylmalonic aciduria type A homolog, mitochondrial from Mus musculus (Mouse).